Reading from the N-terminus, the 459-residue chain is Heat stress transcription factor A-4d (459 aa).

Residues 127 to 189 (AESERRELEE…QKNIVASLCE (63 aa)) are a coiled coil. Residues 141 to 191 (LKYEKSILVADLQRQNQQQYVINWQMQAMEGRLVAMEQRQKNIVASLCEML) are hydrophobic repeat HR-A/B. The Nuclear localization signal signature appears at 209–213 (SKKRR). The segment covering 364–388 (YPTQADVNSEIASSTDTSQDGTSET) has biased composition (polar residues). The tract at residues 364–398 (YPTQADVNSEIASSTDTSQDGTSETEASHGPTNDV) is disordered. The AHA signature appears at 397–406 (DVFWERFLTE).

Belongs to the HSF family. Class A subfamily. In terms of assembly, homotrimer. Exhibits temperature-dependent phosphorylation.

It localises to the nucleus. Functionally, transcriptional regulator that specifically binds DNA of heat shock promoter elements (HSE). The sequence is that of Heat stress transcription factor A-4d (HSFA4D) from Oryza sativa subsp. japonica (Rice).